Here is a 158-residue protein sequence, read N- to C-terminus: NAD(P)H-quinone oxidoreductase subunit J, chloroplastic (158 aa).

This sequence belongs to the complex I 30 kDa subunit family. NDH is composed of at least 16 different subunits, 5 of which are encoded in the nucleus.

Its subcellular location is the plastid. It localises to the chloroplast thylakoid membrane. The enzyme catalyses a plastoquinone + NADH + (n+1) H(+)(in) = a plastoquinol + NAD(+) + n H(+)(out). It carries out the reaction a plastoquinone + NADPH + (n+1) H(+)(in) = a plastoquinol + NADP(+) + n H(+)(out). In terms of biological role, NDH shuttles electrons from NAD(P)H:plastoquinone, via FMN and iron-sulfur (Fe-S) centers, to quinones in the photosynthetic chain and possibly in a chloroplast respiratory chain. The immediate electron acceptor for the enzyme in this species is believed to be plastoquinone. Couples the redox reaction to proton translocation, and thus conserves the redox energy in a proton gradient. The chain is NAD(P)H-quinone oxidoreductase subunit J, chloroplastic from Piper cenocladum (Ant piper).